A 565-amino-acid polypeptide reads, in one-letter code: 4-coumarate--CoA ligase-like 2 (565 aa).

Positions 221, 222, 223, 224, 225, and 229 each coordinate ATP. Phe265 is a binding site for (E)-4-coumaroyl-AMP. Residue Lys286 coordinates CoA. The segment at 288–359 (DMAKLLSAVE…ENYPKVKILQ (72 aa)) is SBD1. Residues Gly337, Gln359, Gly360, and Thr364 each contribute to the (E)-4-coumaroyl-AMP site. ATP is bound by residues Gln359, Gly360, Thr364, Asp445, and Arg460. Residues 360 to 424 (GYGLTESTAI…IRSPTVMKGY (65 aa)) are SBD2. Lys462 and Lys466 together coordinate (E)-4-coumaroyl-AMP. A CoA-binding site is contributed by Gly469. Lys551 provides a ligand contact to ATP. The Microbody targeting signal signature appears at 563-565 (SKL).

It belongs to the ATP-dependent AMP-binding enzyme family. The cofactor is Mg(2+).

Its subcellular location is the peroxisome. The catalysed reaction is (E)-4-coumarate + ATP + CoA = (E)-4-coumaroyl-CoA + AMP + diphosphate. It carries out the reaction (E)-4-coumarate + ATP + H(+) = (E)-4-coumaroyl-AMP + diphosphate. The enzyme catalyses (E)-4-coumaroyl-AMP + CoA = (E)-4-coumaroyl-CoA + AMP + H(+). Functionally, carboxylate--CoA ligase that may use 4-coumarate as substrate. Follows a two-step reaction mechanism, wherein the carboxylate substrate first undergoes adenylation by ATP, followed by a thioesterification in the presence of CoA to yield the final CoA thioester. This chain is 4-coumarate--CoA ligase-like 2, found in Arabidopsis thaliana (Mouse-ear cress).